The primary structure comprises 522 residues: Subtilisin-like protease 10 (522 aa).

Positions 1–19 are cleaved as a signal peptide; that stretch reads MFFFKGVVAVLSFFSAVNA. The propeptide occupies 20–117; that stretch reads APFMKPNNGT…VERDQIGTSQ (98 aa). Positions 36-113 constitute an Inhibitor I9 domain; it reads SYIVLLKRDI…HVAHVERDQI (78 aa). One can recognise a Peptidase S8 domain in the interval 127–405; sequence NWGLGRLSNS…KLLVNGANGT (279 aa). Catalysis depends on charge relay system residues Asp-159 and His-190. N-linked (GlcNAc...) asparagine glycosylation is present at Asn-251. The Charge relay system role is filled by Ser-348. The span at 383-397 shows a compositional bias: polar residues; the sequence is SASVKNPGPNTTNKL. Positions 383-515 are disordered; that stretch reads SASVKNPGPN…GWNRPMWWNR (133 aa). N-linked (GlcNAc...) asparagine glycosylation is found at Asn-392 and Asn-403. The segment covering 432–459 has biased composition (pro residues); sequence SQNPPPGQNPPPGQNPPPEQPAPSPPAN.

This sequence belongs to the peptidase S8 family.

Its subcellular location is the secreted. In terms of biological role, secreted subtilisin-like serine protease with keratinolytic activity that contributes to pathogenicity. This chain is Subtilisin-like protease 10 (SUB10), found in Trichophyton verrucosum (strain HKI 0517).